The primary structure comprises 548 residues: MDSQRNLLVIALLFVSFMIWQAWEQDKNPQPQQQQTTQTTTTAAGSAADQGVPASGQGKQITVKTDVLELTINTRGGDIEQALLLTYPKELKSNEPFQLLETTPEFLYQAQSGLTGRDGPDNPANGARPLYNVDKDTFVMADGQNELAIPMTYTDAAGNTFTKTFTLKRGEYAVSVGYNVQNTSAKPLEVSTFGQLKQSINLPSHRDTGSSNFALHTFRGAAYSTPDTKYEKYKFDTIADNENLNVSAKGGWVAMLQQYFATAWVPNNDGVNNFYTANLGNGIAAIGYKSQPVLVQPGQTGTLGSTLWVGPEIQNKMAAVAPHLDLTVDYGWLWFISQPLFKLLKWIHSFLGNWGFSIIVITFIVRGIMYPLTKAQYTSMAKMRMLQPKIAAMRERLGDDKQRQSQEMMALYKAEKVNPLGGCFPLLIQMPIFLALYYMLMGSVELRHAPFALWIHDLSAQDPYYILPILMGITMFFIQKMSPTTVTDPMQQKIMTFMPVIFTVFFLWFPSGLVLYYIVSNLVTILQQQLIYRGLEKRGLHSREKKKS.

Residues 6–26 (NLLVIALLFVSFMIWQAWEQD) form a helical membrane-spanning segment. Residues 28-58 (NPQPQQQQTTQTTTTAAGSAADQGVPASGQG) are disordered. The span at 29–42 (PQPQQQQTTQTTTT) shows a compositional bias: low complexity. The next 4 membrane-spanning stretches (helical) occupy residues 350–370 (FLGN…GIMY), 420–440 (LGGC…YYML), 458–478 (LSAQ…MFFI), and 499–519 (PVIF…YYIV).

This sequence belongs to the OXA1/ALB3/YidC family. Type 1 subfamily. As to quaternary structure, interacts with the Sec translocase complex via SecD. Specifically interacts with transmembrane segments of nascent integral membrane proteins during membrane integration.

It localises to the cell inner membrane. In terms of biological role, required for the insertion and/or proper folding and/or complex formation of integral membrane proteins into the membrane. Involved in integration of membrane proteins that insert both dependently and independently of the Sec translocase complex, as well as at least some lipoproteins. Aids folding of multispanning membrane proteins. The polypeptide is Membrane protein insertase YidC (Enterobacter sp. (strain 638)).